The primary structure comprises 198 residues: Probable chorismate pyruvate-lyase (198 aa).

Residues Arg-76, Leu-114, and Glu-172 each contribute to the substrate site.

The protein belongs to the UbiC family.

Its subcellular location is the cytoplasm. The catalysed reaction is chorismate = 4-hydroxybenzoate + pyruvate. The protein operates within cofactor biosynthesis; ubiquinone biosynthesis. Functionally, removes the pyruvyl group from chorismate, with concomitant aromatization of the ring, to provide 4-hydroxybenzoate (4HB) for the ubiquinone pathway. In Bordetella avium (strain 197N), this protein is Probable chorismate pyruvate-lyase.